The following is a 335-amino-acid chain: F420-dependent glucose-6-phosphate dehydrogenase 1 (335 aa).

Aspartate 38 serves as a coordination point for coenzyme F420-(gamma-Glu)n. Histidine 39 acts as the Proton donor in catalysis. Residues threonine 75 and 106–107 each bind coenzyme F420-(gamma-Glu)n; that span reads TG. The active-site Proton acceptor is the glutamate 108. Coenzyme F420-(gamma-Glu)n-binding positions include asparagine 111, 176 to 177, and 179 to 180; these read GG and VV. Substrate contacts are provided by threonine 194, lysine 197, lysine 258, and arginine 282.

It belongs to the F420-dependent glucose-6-phosphate dehydrogenase family. Homodimer.

The enzyme catalyses oxidized coenzyme F420-(gamma-L-Glu)(n) + D-glucose 6-phosphate + H(+) = 6-phospho-D-glucono-1,5-lactone + reduced coenzyme F420-(gamma-L-Glu)(n). In terms of biological role, catalyzes the coenzyme F420-dependent oxidation of glucose 6-phosphate (G6P) to 6-phosphogluconolactone. The sequence is that of F420-dependent glucose-6-phosphate dehydrogenase 1 from Rhodococcus jostii (strain RHA1).